A 395-amino-acid chain; its full sequence is Elongation factor Tu (395 aa).

A tr-type G domain is found at 10-204 (KPHLNIGTIG…TVDNYIKEPI (195 aa)). The tract at residues 19 to 26 (GHVDHGKT) is G1. 19–26 (GHVDHGKT) serves as a coordination point for GTP. Residue T26 coordinates Mg(2+). The tract at residues 60 to 64 (GITIN) is G2. Residues 81 to 84 (DCPG) are G3. GTP-binding positions include 81-85 (DCPGH) and 136-139 (NKVD). The interval 136-139 (NKVD) is G4. The tract at residues 174-176 (SAL) is G5.

It belongs to the TRAFAC class translation factor GTPase superfamily. Classic translation factor GTPase family. EF-Tu/EF-1A subfamily. Monomer.

It localises to the cytoplasm. The enzyme catalyses GTP + H2O = GDP + phosphate + H(+). In terms of biological role, GTP hydrolase that promotes the GTP-dependent binding of aminoacyl-tRNA to the A-site of ribosomes during protein biosynthesis. This Karelsulcia muelleri (strain GWSS) (Sulcia muelleri) protein is Elongation factor Tu.